Here is a 307-residue protein sequence, read N- to C-terminus: Ornithine carbamoyltransferase (307 aa).

Carbamoyl phosphate-binding positions include 50-53 (STRT), Gln-77, Arg-101, and 128-131 (HPCQ). Residues Asn-160, Asp-224, and 228–229 (SM) contribute to the L-ornithine site. Carbamoyl phosphate-binding positions include 264 to 265 (CL) and Arg-292.

The protein belongs to the aspartate/ornithine carbamoyltransferase superfamily. OTCase family.

The protein resides in the cytoplasm. It catalyses the reaction carbamoyl phosphate + L-ornithine = L-citrulline + phosphate + H(+). It participates in amino-acid biosynthesis; L-arginine biosynthesis; L-arginine from L-ornithine and carbamoyl phosphate: step 1/3. Functionally, reversibly catalyzes the transfer of the carbamoyl group from carbamoyl phosphate (CP) to the N(epsilon) atom of ornithine (ORN) to produce L-citrulline. In Mycolicibacterium gilvum (strain PYR-GCK) (Mycobacterium gilvum (strain PYR-GCK)), this protein is Ornithine carbamoyltransferase.